The following is a 503-amino-acid chain: MDIPIPTRQLFINGDWKAPVLNKRIPVINPATQNIIGDIPAATKEDVDVAVAAAKTALTRNKGADWATASGAVRARYLRAIAAKVTEKKPELAKLESIDCGKPLDEAAWDIDDVAGCFEYYADLAEKLDARQKAPVSLPMDTFKSHVLREPIGVVGLITPWNYPMLMATWKVAPALAAGCAAILKPSELASLTCLELGEICKEVGLPPGVLNILTGLGPEAGAPLATHPDVDKVAFTGSSATGSKIMTAAAQLVKPVSLELGGKSPLVVFEDVDLDKAAEWAIFGCFWTNGQICSATSRLILHESIATEFLNRIVKWIKNIKISDPLEEGCRLGPVVSEGQYEKILKFVSNAKSEGATILTGGSRPEHLKKGFFIEPTIITDVTTNMQIWREEVFGPVLCVKTFSTEEEAIDLANDTVYGLGAAVISNDLERCERVTKAFKAGIVWVNCSQPCFTQAPWGGVKRSGFGRELGEWGLDNYLSVKQVTQYISEEPWGWYQPPAKL.

Residues Ile28 and Asp99 each coordinate Na(+). 2 residues coordinate NAD(+): Trp161 and Lys185. Leu189 lines the Na(+) pocket. NAD(+) is bound at residue Ser239. The Proton acceptor role is filled by Glu260. Cys294 acts as the Nucleophile in catalysis. A Microbody targeting signal motif is present at residues 501–503 (AKL).

The protein belongs to the aldehyde dehydrogenase family. As to quaternary structure, forms homodimers.

The protein resides in the peroxisome. It catalyses the reaction 3-aminopropanal + NAD(+) + H2O = beta-alanine + NADH + 2 H(+). It carries out the reaction 4-aminobutanal + NAD(+) + H2O = 4-aminobutanoate + NADH + 2 H(+). The enzyme catalyses 4-guanidinobutanal + NAD(+) + H2O = 4-guanidinobutanoate + NADH + 2 H(+). It participates in amine and polyamine biosynthesis; betaine biosynthesis via choline pathway; betaine from betaine aldehyde: step 1/1. Functionally, dehydrogenase that catalyzes the oxidation of several aminoaldehydes. Metabolizes and detoxifies aldehyde products of polyamine degradation to non-toxic amino acids. Catalyzes the oxidation of 3-aminopropanal to beta-alanine. Catalyzes the oxidation of 4-aminobutanal to 4-aminobutanoate. Catalyzes the oxidation of 4-guanidinobutanal to 4-guanidinobutanoate. This Pisum sativum (Garden pea) protein is Aminoaldehyde dehydrogenase 2, peroxisomal.